Here is a 217-residue protein sequence, read N- to C-terminus: Dephospho-CoA kinase (217 aa).

The DPCK domain maps to 4–203; it reads IVALTGGISS…SHLSRIYNKN (200 aa). Position 12 to 17 (12 to 17) interacts with ATP; that stretch reads SSGKTT.

The protein belongs to the CoaE family.

The protein resides in the cytoplasm. The catalysed reaction is 3'-dephospho-CoA + ATP = ADP + CoA + H(+). Its pathway is cofactor biosynthesis; coenzyme A biosynthesis; CoA from (R)-pantothenate: step 5/5. Functionally, catalyzes the phosphorylation of the 3'-hydroxyl group of dephosphocoenzyme A to form coenzyme A. This is Dephospho-CoA kinase from Buchnera aphidicola subsp. Acyrthosiphon pisum (strain APS) (Acyrthosiphon pisum symbiotic bacterium).